The sequence spans 320 residues: Serpentine receptor class gamma-17 (320 aa).

The next 6 helical transmembrane spans lie at 25–45, 80–100, 155–175, 192–212, 237–257, and 268–288; these read AIYFVTACYLSVGLFCHISLL, IFFGRIFMYIPQLCPFVSTFF, FIMLILPFAGLWNIMISQVIA, WASLSLFQSICILTALGFTIV, FTSISISCTFLLVAGTQLTFA, and YILQFLAFDTFNVGSAIIMFL.

It belongs to the nematode receptor-like protein srg family.

It is found in the membrane. The sequence is that of Serpentine receptor class gamma-17 (srg-17) from Caenorhabditis elegans.